The primary structure comprises 455 residues: GTPase Der (455 aa).

EngA-type G domains follow at residues proline 4–histidine 169 and isoleucine 178–arginine 353. Residues glycine 10–serine 17, aspartate 57–leucine 61, asparagine 120–glutamate 123, glycine 184–serine 191, aspartate 231–isoleucine 235, and asparagine 296–aspartate 299 contribute to the GTP site. The KH-like domain occupies arginine 354–glutamine 439.

The protein belongs to the TRAFAC class TrmE-Era-EngA-EngB-Septin-like GTPase superfamily. EngA (Der) GTPase family. In terms of assembly, associates with the 50S ribosomal subunit.

Its function is as follows. GTPase that plays an essential role in the late steps of ribosome biogenesis. The chain is GTPase Der from Prochlorococcus marinus (strain MIT 9313).